The following is a 289-amino-acid chain: MSTALINSITYFLSEHPYIVGFRWSNSQSWGSTWSFLFTSISLYIAVSSSLHILLSAVRRSNRSVPLGHIPEIHSLLMSILSATIFAGILLSAAAEIRDTRWLWRRSKTATPLQWLLCFPLGTRPSGRVFFWSYVFYLTRFLHMFRTIFAVLRSRRLAVSQLFCNSVMAFTSFLWLEFSQSYQILAILSTTLVYSVVYGYRFWTGFGLPGSAFPSFVVNCQLVLVGCNLVSHAGVLTMHLFKGGCNGIGAWGLNSVLNGAILLLFLNFYVRMHSPMRRHINKMNSQRNA.

The next 7 membrane-spanning stretches (helical) occupy residues 35 to 55, 75 to 95, 129 to 149, 157 to 176, 181 to 203, 205 to 225, and 248 to 268; these read SFLF…HILL, SLLM…SAAA, VFFW…RTIF, LAVS…FLWL, SYQI…YRFW, GFGL…LVLV, and IGAW…FLNF.

Belongs to the ELO family.

The protein resides in the membrane. In terms of biological role, probable very long-chain fatty acid (VLCFA) elongase that controls VLCFA composition and functions to inhibit abscisic acid (ABA)-mediated stress responses, including regulation of stomatal aperture, maintenance of primary root growth and inhibition of germination. VLCFA pathway and products may function as signaling components acting upstream of sphingosine-1-phosphate, ceramide and the heterotrimeric G-protein complex, in lipid-mediated regulation of abiotic stress signaling. This chain is Fatty acid elongase 3-like (HOS3), found in Arabidopsis thaliana (Mouse-ear cress).